The sequence spans 165 residues: Neurotrophin-3 (165 aa).

Positions 1-3 are cleaved as a signal peptide; that stretch reads IQS. A propeptide spanning residues 4-119 is cleaved from the precursor; the sequence is TSMDQGSLSE…VLNRTSRRKR (116 aa). Residues 32–61 form a disordered region; sequence KVPKQAARTKDGTQTTAKKTEAEPEATANK. Residue asparagine 112 is glycosylated (N-linked (GlcNAc...) asparagine).

Belongs to the NGF-beta family.

It localises to the secreted. Functionally, seems to promote the survival of visceral and proprioceptive sensory neurons. The protein is Neurotrophin-3 (NTF3) of Xenopeltis unicolor (Sunbeam snake).